A 349-amino-acid polypeptide reads, in one-letter code: Phosphoribosylformylglycinamidine cyclo-ligase (349 aa).

The protein belongs to the AIR synthase family.

It is found in the cytoplasm. The catalysed reaction is 2-formamido-N(1)-(5-O-phospho-beta-D-ribosyl)acetamidine + ATP = 5-amino-1-(5-phospho-beta-D-ribosyl)imidazole + ADP + phosphate + H(+). Its pathway is purine metabolism; IMP biosynthesis via de novo pathway; 5-amino-1-(5-phospho-D-ribosyl)imidazole from N(2)-formyl-N(1)-(5-phospho-D-ribosyl)glycinamide: step 2/2. The chain is Phosphoribosylformylglycinamidine cyclo-ligase from Listeria monocytogenes serotype 4b (strain CLIP80459).